A 405-amino-acid polypeptide reads, in one-letter code: Protein PAG1 (405 aa).

An N-terminal signal peptide occupies residues 1–50 (MVSLIILFRLTFAIANRVRTLMKVLVIVSFFVLTGSASADSGALSLSGAA). 4 N-linked (GlcNAc...) asparagine glycosylation sites follow: Asn55, Asn104, Asn256, and Asn351. Residue Ala391 is the site of GPI-anchor amidated alanine attachment. Positions 392 to 405 (DSLRRTLALLFLLF) are cleaved as a propeptide — removed in mature form.

It localises to the cell membrane. This is Protein PAG1 (PAG1) from Trypanosoma brucei brucei.